Here is a 485-residue protein sequence, read N- to C-terminus: dTDP-4-amino-4,6-dideoxy-D-glucose ammonia-lyase (485 aa).

Residues Cys-141, Cys-145, and Cys-148 each coordinate [4Fe-4S] cluster.

This sequence belongs to the radical SAM superfamily. DesII family. Monomer. [4Fe-4S] cluster serves as cofactor.

It catalyses the reaction dTDP-4-amino-4,6-dideoxy-alpha-D-glucose + AH2 + S-adenosyl-L-methionine = dTDP-3-dehydro-4,6-dideoxy-alpha-D-glucose + 5'-deoxyadenosine + L-methionine + A + NH4(+) + H(+). Involved in the biosynthesis of dTDP-alpha-D-desosamine, a sugar found in several bacterial macrolide antibiotics. Catalyzes the SAM-dependent deamination of dTDP-4-amino-4,6-deoxyglucose (dTDP-viosamine) to yield dTDP-3-keto-4,6-deoxyglucose. It can also catalyze the oxidative dehydrogenation of the non-physiological substrate dTDP-D-quinovose to dTDP-3-keto-6-deoxy-d-glucose. It can also deaminate dTDP-3-amino-3,6-deoxyglucose. This chain is dTDP-4-amino-4,6-dideoxy-D-glucose ammonia-lyase, found in Streptomyces venezuelae.